The primary structure comprises 262 residues: Trypsin theta (262 aa).

The first 19 residues, 1–19 (MHGLVVLLVCLAVGSAFAG), serve as a signal peptide directing secretion. A propeptide spans 20-34 (TIGVSNADPFEREGR) (activation peptide). Residues 35–260 (IVGGEDTTIR…LRKWILNASQ (226 aa)) form the Peptidase S1 domain. A disulfide bridge connects residues cysteine 61 and cysteine 77. Active-site charge relay system residues include histidine 76 and aspartate 121. 2 cysteine pairs are disulfide-bonded: cysteine 186–cysteine 203 and cysteine 212–cysteine 236. The active-site Charge relay system is serine 216.

It belongs to the peptidase S1 family.

It localises to the secreted. The protein resides in the extracellular space. It catalyses the reaction Preferential cleavage: Arg-|-Xaa, Lys-|-Xaa.. This Drosophila erecta (Fruit fly) protein is Trypsin theta (thetaTry).